The sequence spans 202 residues: MDPKDRKKIQFSVPAPPSQLDPRQVEMIRRRRPTPAMLFRLSEHSSPEEEASPHQRASGEGHHLKSKRSNPCAYTPPSLKAVQRIAESHLQSISNLGENQASEEEDELGELRELGYPREEEEEEEEEDEEEEEDSQAEVLKGSRGSAGQKTTYGQGLEGPWERPPPLDGPQRDGSSEDQVEDPALNEPGEEPQRPAHPEPGT.

At M1 the chain carries N-acetylmethionine. Residues 1-202 (MDPKDRKKIQ…QRPAHPEPGT (202 aa)) form a disordered region. T34 carries the post-translational modification Phosphothreonine; by PKA. A compositionally biased stretch (basic and acidic residues) spans 41–63 (LSEHSSPEEEASPHQRASGEGHH). Residues S45 and S46 each carry the phosphoserine modification. T75 carries the phosphothreonine; by CDK5 modification. Positions 89–100 (HLQSISNLGENQ) are enriched in polar residues. S102 bears the Phosphoserine mark. A compositionally biased stretch (basic and acidic residues) spans 109-118 (GELRELGYPR). A compositionally biased stretch (acidic residues) spans 119–136 (EEEEEEEEEDEEEEEDSQ). S135 is modified (phosphoserine). Residues 191–202 (EPQRPAHPEPGT) are compositionally biased toward basic and acidic residues.

It belongs to the protein phosphatase inhibitor 1 family. In terms of processing, dopamine- and cyclic AMP-regulated neuronal phosphoprotein. Post-translationally, phosphorylation of Thr-34 is required for activity.

It localises to the cytoplasm. Inhibitor of protein-phosphatase 1. The polypeptide is Protein phosphatase 1 regulatory subunit 1B (PPP1R1B) (Bos taurus (Bovine)).